Consider the following 237-residue polypeptide: Necrosis-inducing protein NPP1 (237 aa).

A signal peptide spans 1–19 (MNVLTFLIAAAVSLAVVQA). N-linked (GlcNAc...) asparagine glycosylation is present at Asn-67. The Conserved undecapeptide motif signature appears at 103–113 (AIMYSWYFPKD). The Conserved heptapetpide motif motif lies at 120–126 (GHRHDWE).

Belongs to the Necrosis inducing protein (NPP1) family.

Its subcellular location is the secreted. Functionally, secreted effector that acts as a pathogen-associated molecular pattern (PAMP) recognized by the plant immune system. Induces necrotic cell death and ethylene biosynthesis in parsley. Stimulates early induced host cellular responses implicated in elicitor signal transmission such as increased levels of cytoplasmic calcium, production of reactive oxygen species (ROS), and MAP kinase activation. Infiltration of NPP1 into leaves of Arabidopsis thaliana results in transcript accumulation of pathogenesis-related (PR) genes, production of ROS and ethylene, callose apposition, and hypersensitive response (HR)-like cell death. NPP1-mediated induction of the PR1 gene is salicylic acid-dependent, and requires both functional NDR1 and PAD4. The protein is Necrosis-inducing protein NPP1 of Phytophthora nicotianae (Potato buckeye rot agent).